The chain runs to 496 residues: L-arabinose isomerase (496 aa).

Mn(2+) is bound by residues Glu306, Glu331, His348, and His447.

This sequence belongs to the arabinose isomerase family. The cofactor is Mn(2+).

It carries out the reaction beta-L-arabinopyranose = L-ribulose. It functions in the pathway carbohydrate degradation; L-arabinose degradation via L-ribulose; D-xylulose 5-phosphate from L-arabinose (bacterial route): step 1/3. Its function is as follows. Catalyzes the conversion of L-arabinose to L-ribulose. The polypeptide is L-arabinose isomerase (Geobacillus thermodenitrificans (strain NG80-2)).